The following is a 136-amino-acid chain: Early E3 15.3 kDa protein (136 aa).

This sequence belongs to the adenoviridae E3_15 family.

Protects virus-infected cells from TNF-induced cytolysis. This Human adenovirus B serotype 3 (HAdV-3) protein is Early E3 15.3 kDa protein.